We begin with the raw amino-acid sequence, 391 residues long: Trehalose-phosphate phosphatase (391 aa).

Asp-147 functions as the Nucleophile in the catalytic mechanism. Mg(2+)-binding residues include Asp-147, Asp-149, and Asp-330. Asp-147–Asp-149 serves as a coordination point for substrate.

Belongs to the trehalose phosphatase family. Requires Mg(2+) as cofactor.

It carries out the reaction alpha,alpha-trehalose 6-phosphate + H2O = alpha,alpha-trehalose + phosphate. It functions in the pathway glycan biosynthesis; trehalose biosynthesis. Removes the phosphate from trehalose 6-phosphate to produce free trehalose. The protein is Trehalose-phosphate phosphatase (otsB) of Mycolicibacterium paratuberculosis (strain ATCC BAA-968 / K-10) (Mycobacterium paratuberculosis).